The chain runs to 134 residues: MKGRILILSLLIMSLVMAQVQVEAKICCPSNQARNGYSVCRIRFSKGRCMQVSGCQNSDTCPRGWVNAILENSADATNEHCKLGCETSVCGAMNTLQNSDASEIVNGASEQCAKGCSIFCTKSYVVPPGPPKLL.

Positions 1 to 24 are cleaved as a signal peptide; that stretch reads MKGRILILSLLIMSLVMAQVQVEA. Intrachain disulfides connect cysteine 27–cysteine 61, cysteine 28–cysteine 55, and cysteine 40–cysteine 49. The propeptide at 68–134 is acidic domain; sequence AILENSADAT…VVPPGPPKLL (67 aa).

Belongs to the plant thionin (TC 1.C.44) family. As to expression, detected in rosette leaves and at a very high level in flowers and in siliques.

The protein localises to the secreted. Seems to function as a defense factor. Thionins are small plant proteins which are toxic to animal cells. They seem to exert their toxic effect at the level of the cell membrane. Their precise function is not known. The polypeptide is Thionin-2.1 (THI2.1) (Arabidopsis thaliana (Mouse-ear cress)).